The primary structure comprises 442 residues: O-methyltransferase pgmB (442 aa).

An S-adenosyl-L-methionine-binding site is contributed by aspartate 291. The active-site Proton acceptor is the histidine 341.

The protein belongs to the class I-like SAM-binding methyltransferase superfamily. Cation-independent O-methyltransferase family.

The protein operates within pigment biosynthesis. It participates in secondary metabolite biosynthesis. Functionally, O-methyltransferase; part of the gene cluster that mediates the biosynthesis of pleosporalin A, ascomycone A, as well as a third cryptic naphthoquinone derived pigment, all responsible for the coloration of conidia. Specifically methylates position C-6 of the pgmA product 3-acetonyl-1,6,8-trihydroxy-2-naphthaldehyde to yield fusarubinaldehyde. The pathway begins with the biosynthesis of the cyclized heptaketide 3-acetonyl-1,6,8-trihydroxy-2-naphthaldehyde by the NR-PKS pgmA. The C-6 hydroxyl group is further methylated by the O-methyltransferase pgmB to yield fusarubinaldehyde which is in turn oxidized by the cytochrome P450 monooxygenase pgmC at C-9. The C-1 hydroxyl group is then methylated spontaneously. Although pgmE, pgmD and pgmH are essential for the production of pleosporalin A, it is not the case for the 2 other final products and it remains difficult to assign a specific function to each enzyme. PgmF and pgmG seem not to be involved in pigment biosynthesis although they were regulated by the cluster-specific transcription factor pgmR. This Aspergillus terreus protein is O-methyltransferase pgmB.